Reading from the N-terminus, the 413-residue chain is Multidrug resistance protein MdtA (413 aa).

A signal peptide spans 1-20; sequence MKGSNTFRWAIAIGVVVAAA. Disordered regions lie at residues 31–57 and 392–413; these read SPTA…RDGP and PQTT…GARA. Positions 397–413 are enriched in basic and acidic residues; it reads ADEKSPSRHEGQKGARA.

The protein belongs to the membrane fusion protein (MFP) (TC 8.A.1) family. Part of a tripartite efflux system composed of MdtA, MdtB and MdtC.

The protein localises to the cell inner membrane. This is Multidrug resistance protein MdtA from Salmonella heidelberg (strain SL476).